The primary structure comprises 354 residues: Protein Wnt-11 (354 aa).

Residues 1 to 24 (MRARPQVCEALLFALALHTGVCYG) form the signal peptide. N40 and N90 each carry an N-linked (GlcNAc...) asparagine glycan. 3 disulfides stabilise this stretch: C80–C91, C130–C138, and C140–C157. N160 is a glycosylation site (N-linked (GlcNAc...) asparagine). 8 disulfide bridges follow: C209-C223, C211-C218, C283-C314, C299-C309, C313-C353, C329-C344, C331-C341, and C336-C337. A lipid anchor (O-palmitoleoyl serine; by PORCN) is attached at S215. N-linked (GlcNAc...) asparagine glycans are attached at residues N300 and N304.

This sequence belongs to the Wnt family. In terms of processing, palmitoleoylation is required for efficient binding to frizzled receptors. Depalmitoleoylation leads to Wnt signaling pathway inhibition.

The protein resides in the secreted. It is found in the extracellular space. It localises to the extracellular matrix. Its function is as follows. Ligand for members of the frizzled family of seven transmembrane receptors. Probable developmental protein. May be a signaling molecule which affects the development of discrete regions of tissues. Is likely to signal over only few cell diameters. The polypeptide is Protein Wnt-11 (Wnt11) (Mus musculus (Mouse)).